The primary structure comprises 320 residues: Malate dehydrogenase (320 aa).

NAD(+) is bound by residues 10–15 (GAGQIG) and Asp-34. Residues Arg-83 and Arg-89 each coordinate substrate. NAD(+) contacts are provided by residues Asn-96 and 119 to 121 (ITN). Residues Asn-121 and Arg-152 each contribute to the substrate site. His-176 (proton acceptor) is an active-site residue.

Belongs to the LDH/MDH superfamily. MDH type 3 family.

The enzyme catalyses (S)-malate + NAD(+) = oxaloacetate + NADH + H(+). Functionally, catalyzes the reversible oxidation of malate to oxaloacetate. This chain is Malate dehydrogenase, found in Jannaschia sp. (strain CCS1).